We begin with the raw amino-acid sequence, 357 residues long: S-adenosylmethionine:tRNA ribosyltransferase-isomerase (357 aa).

The protein belongs to the QueA family. Monomer.

The protein resides in the cytoplasm. The catalysed reaction is 7-aminomethyl-7-carbaguanosine(34) in tRNA + S-adenosyl-L-methionine = epoxyqueuosine(34) in tRNA + adenine + L-methionine + 2 H(+). It functions in the pathway tRNA modification; tRNA-queuosine biosynthesis. Functionally, transfers and isomerizes the ribose moiety from AdoMet to the 7-aminomethyl group of 7-deazaguanine (preQ1-tRNA) to give epoxyqueuosine (oQ-tRNA). The protein is S-adenosylmethionine:tRNA ribosyltransferase-isomerase of Buchnera aphidicola subsp. Acyrthosiphon pisum (strain APS) (Acyrthosiphon pisum symbiotic bacterium).